The chain runs to 381 residues: O-antigen chain mannosyltransferase B (381 aa).

It belongs to the glycosyltransferase group 1 family. Glycosyltransferase 4 subfamily.

It carries out the reaction alpha-D-mannosyl-(1-&gt;3)-N-acetyl-alpha-D-glucosaminyl-di-trans,octa-cis-undecaprenyl diphosphate + 2 GDP-alpha-D-mannose = alpha-D-mannosyl-(1-&gt;3)-alpha-D-mannosyl-(1-&gt;3)-alpha-D-mannosyl-(1-&gt;3)-N-acetyl-alpha-D-glucosaminyl-di-trans,octa-cis-undecaprenyl diphosphate + 2 GDP + 2 H(+). The protein operates within bacterial outer membrane biogenesis; LPS O-antigen biosynthesis. In terms of biological role, mannosyltransferase involved in the biosynthesis of the repeat unit of the lipopolysaccharide (LPS) O-antigen region. Catalyzes the transfer of two alpha-(1-&gt;3)-linked mannose residues to the product of the WbdC enzyme during the synthesis of the adapter region. This Escherichia coli protein is O-antigen chain mannosyltransferase B.